The primary structure comprises 43 residues: Cuticle protein CP434 (43 aa).

Repeat copies occupy residues 1–18 (ALVG…PVQF) and 25–42 (VLTG…NIQL).

In terms of tissue distribution, calcified shell.

This Cancer pagurus (Rock crab) protein is Cuticle protein CP434.